Consider the following 273-residue polypeptide: Tryptophan synthase alpha chain (273 aa).

Catalysis depends on proton acceptor residues Glu56 and Asp67.

It belongs to the TrpA family. Tetramer of two alpha and two beta chains.

It catalyses the reaction (1S,2R)-1-C-(indol-3-yl)glycerol 3-phosphate + L-serine = D-glyceraldehyde 3-phosphate + L-tryptophan + H2O. The protein operates within amino-acid biosynthesis; L-tryptophan biosynthesis; L-tryptophan from chorismate: step 5/5. Functionally, the alpha subunit is responsible for the aldol cleavage of indoleglycerol phosphate to indole and glyceraldehyde 3-phosphate. This chain is Tryptophan synthase alpha chain, found in Shewanella baltica (strain OS185).